We begin with the raw amino-acid sequence, 232 residues long: 7-cyano-7-deazaguanine synthase (232 aa).

7–17 (CSGGLDSVSLA) contributes to the ATP binding site. Positions 185, 193, 196, and 199 each coordinate Zn(2+).

Belongs to the QueC family. Requires Zn(2+) as cofactor.

It catalyses the reaction 7-carboxy-7-deazaguanine + NH4(+) + ATP = 7-cyano-7-deazaguanine + ADP + phosphate + H2O + H(+). It functions in the pathway purine metabolism; 7-cyano-7-deazaguanine biosynthesis. In terms of biological role, catalyzes the ATP-dependent conversion of 7-carboxy-7-deazaguanine (CDG) to 7-cyano-7-deazaguanine (preQ(0)). This chain is 7-cyano-7-deazaguanine synthase, found in Brucella canis (strain ATCC 23365 / NCTC 10854 / RM-666).